A 224-amino-acid chain; its full sequence is Orotidine 5'-phosphate decarboxylase (224 aa).

Residues aspartate 10, lysine 32, 59 to 68 (DLKLHDIPNT), threonine 115, arginine 175, glutamine 184, glycine 204, and arginine 205 contribute to the substrate site. Catalysis depends on lysine 61, which acts as the Proton donor.

This sequence belongs to the OMP decarboxylase family. Type 1 subfamily. In terms of assembly, homodimer.

It catalyses the reaction orotidine 5'-phosphate + H(+) = UMP + CO2. It participates in pyrimidine metabolism; UMP biosynthesis via de novo pathway; UMP from orotate: step 2/2. Catalyzes the decarboxylation of orotidine 5'-monophosphate (OMP) to uridine 5'-monophosphate (UMP). This Novosphingobium aromaticivorans (strain ATCC 700278 / DSM 12444 / CCUG 56034 / CIP 105152 / NBRC 16084 / F199) protein is Orotidine 5'-phosphate decarboxylase.